The chain runs to 291 residues: Taste receptor type 2 member 16 (291 aa).

M1 is a topological domain (extracellular). A helical transmembrane segment spans residues I2–I22. At V23 to R41 the chain is on the cytoplasmic side. A helical membrane pass occupies residues L42–A62. Topologically, residues S63–T84 are extracellular. N-linked (GlcNAc...) asparagine glycosylation occurs at N80. Residues W85–I105 form a helical membrane-spanning segment. Over K106–L125 the chain is Cytoplasmic. Residues F126 to I146 form a helical membrane-spanning segment. Residues G147–T182 are Extracellular-facing. N163 is a glycosylation site (N-linked (GlcNAc...) asparagine). A helical membrane pass occupies residues V183 to L203. The Cytoplasmic portion of the chain corresponds to T204–S228. A helical transmembrane segment spans residues L229–G249. The Extracellular segment spans residues T250–W257. A helical transmembrane segment spans residues L258–L278. The Cytoplasmic segment spans residues S279 to C291.

The protein belongs to the G-protein coupled receptor T2R family. Interacts with RTP3 and RTP4.

The protein resides in the cell membrane. Receptor that may play a role in the perception of bitterness and is gustducin-linked. May play a role in sensing the chemical composition of the gastrointestinal content. The activity of this receptor may stimulate alpha gustducin, mediate PLC-beta-2 activation and lead to the gating of TRPM5. The polypeptide is Taste receptor type 2 member 16 (TAS2R16) (Pan paniscus (Pygmy chimpanzee)).